Here is a 564-residue protein sequence, read N- to C-terminus: Dihydroxy-acid dehydratase (564 aa).

C55 lines the [2Fe-2S] cluster pocket. Mg(2+) is bound at residue D87. C128 is a binding site for [2Fe-2S] cluster. Residues D129 and K130 each coordinate Mg(2+). N6-carboxylysine is present on K130. C200 provides a ligand contact to [2Fe-2S] cluster. Position 452 (E452) interacts with Mg(2+). Catalysis depends on S478, which acts as the Proton acceptor.

It belongs to the IlvD/Edd family. As to quaternary structure, homodimer. [2Fe-2S] cluster is required as a cofactor. Mg(2+) serves as cofactor.

It catalyses the reaction (2R)-2,3-dihydroxy-3-methylbutanoate = 3-methyl-2-oxobutanoate + H2O. The catalysed reaction is (2R,3R)-2,3-dihydroxy-3-methylpentanoate = (S)-3-methyl-2-oxopentanoate + H2O. The protein operates within amino-acid biosynthesis; L-isoleucine biosynthesis; L-isoleucine from 2-oxobutanoate: step 3/4. It participates in amino-acid biosynthesis; L-valine biosynthesis; L-valine from pyruvate: step 3/4. Functions in the biosynthesis of branched-chain amino acids. Catalyzes the dehydration of (2R,3R)-2,3-dihydroxy-3-methylpentanoate (2,3-dihydroxy-3-methylvalerate) into 2-oxo-3-methylpentanoate (2-oxo-3-methylvalerate) and of (2R)-2,3-dihydroxy-3-methylbutanoate (2,3-dihydroxyisovalerate) into 2-oxo-3-methylbutanoate (2-oxoisovalerate), the penultimate precursor to L-isoleucine and L-valine, respectively. The polypeptide is Dihydroxy-acid dehydratase (Albidiferax ferrireducens (strain ATCC BAA-621 / DSM 15236 / T118) (Rhodoferax ferrireducens)).